Consider the following 493-residue polypeptide: Adenylyltransferase and sulfurtransferase uba4 (493 aa).

ATP-binding positions include Gly-99, Asp-120, 127–131 (SNLHR), Lys-144, and 188–189 (DN). The Zn(2+) site is built by Cys-237 and Cys-240. Catalysis depends on Cys-254, which acts as the Glycyl thioester intermediate; for adenylyltransferase activity. Residues Cys-316 and Cys-319 each contribute to the Zn(2+) site. One can recognise a Rhodanese domain in the interval 376–491 (INKEPTIIDV…WREQIDPDWP (116 aa)). The Cysteine persulfide intermediate; for sulfurtransferase activity role is filled by Cys-446.

This sequence in the N-terminal section; belongs to the HesA/MoeB/ThiF family. UBA4 subfamily. Zn(2+) is required as a cofactor.

The protein resides in the cytoplasm. The protein localises to the cytosol. The catalysed reaction is [molybdopterin-synthase sulfur-carrier protein]-C-terminal Gly-Gly + ATP + H(+) = [molybdopterin-synthase sulfur-carrier protein]-C-terminal Gly-Gly-AMP + diphosphate. It catalyses the reaction [molybdopterin-synthase sulfur-carrier protein]-C-terminal Gly-Gly-AMP + S-sulfanyl-L-cysteinyl-[cysteine desulfurase] + AH2 = [molybdopterin-synthase sulfur-carrier protein]-C-terminal-Gly-aminoethanethioate + L-cysteinyl-[cysteine desulfurase] + A + AMP + 2 H(+). Its pathway is tRNA modification; 5-methoxycarbonylmethyl-2-thiouridine-tRNA biosynthesis. It participates in cofactor biosynthesis; molybdopterin biosynthesis. Plays a central role in 2-thiolation of mcm(5)S(2)U at tRNA wobble positions of cytosolic tRNA(Lys), tRNA(Glu) and tRNA(Gln). Also essential during biosynthesis of the molybdenum cofactor. Acts by mediating the C-terminal thiocarboxylation of sulfur carriers urm1 and mocs2a. Its N-terminus first activates urm1 and mocs2a as acyl-adenylates (-COAMP), then the persulfide sulfur on the catalytic cysteine is transferred to urm1 and mocs2a to form thiocarboxylation (-COSH) of their C-terminus. The reaction probably involves hydrogen sulfide that is generated from the persulfide intermediate and that acts as a nucleophile towards urm1 and mocs2a. Subsequently, a transient disulfide bond is formed. Does not use thiosulfate as sulfur donor; nfs1 probably acting as a sulfur donor for thiocarboxylation reactions. In Aspergillus fumigatus (strain ATCC MYA-4609 / CBS 101355 / FGSC A1100 / Af293) (Neosartorya fumigata), this protein is Adenylyltransferase and sulfurtransferase uba4.